A 261-amino-acid polypeptide reads, in one-letter code: 5-oxoprolinase subunit A (261 aa).

The protein belongs to the LamB/PxpA family. As to quaternary structure, forms a complex composed of PxpA, PxpB and PxpC.

It carries out the reaction 5-oxo-L-proline + ATP + 2 H2O = L-glutamate + ADP + phosphate + H(+). In terms of biological role, catalyzes the cleavage of 5-oxoproline to form L-glutamate coupled to the hydrolysis of ATP to ADP and inorganic phosphate. This is 5-oxoprolinase subunit A from Coprothermobacter proteolyticus (strain ATCC 35245 / DSM 5265 / OCM 4 / BT).